The primary structure comprises 215 residues: 3-demethoxyubiquinol 3-hydroxylase (215 aa).

Fe cation contacts are provided by Glu64, Glu94, His97, Glu146, Glu178, and His181.

The protein belongs to the COQ7 family. Fe cation is required as a cofactor.

It localises to the cell membrane. It catalyses the reaction a 5-methoxy-2-methyl-3-(all-trans-polyprenyl)benzene-1,4-diol + AH2 + O2 = a 3-demethylubiquinol + A + H2O. Its pathway is cofactor biosynthesis; ubiquinone biosynthesis. Its function is as follows. Catalyzes the hydroxylation of 2-nonaprenyl-3-methyl-6-methoxy-1,4-benzoquinol during ubiquinone biosynthesis. This is 3-demethoxyubiquinol 3-hydroxylase from Ectopseudomonas mendocina (strain ymp) (Pseudomonas mendocina).